The chain runs to 966 residues: C4 phosphoenolpyruvate carboxylase (966 aa).

The residue at position 11 (Ser11) is a Phosphoserine. His172 is an active-site residue. Trp283, Arg450, and Asp597 together coordinate D-glucose 6-phosphate. Lys600 is an active-site residue. Residue Arg635 coordinates D-glucose 6-phosphate. Residue Arg641 is part of the active site. Arg641 serves as a coordination point for L-aspartate. Residue Thr665 participates in D-glucose 6-phosphate binding. Gln673 is an L-aspartate binding site. D-glucose 6-phosphate contacts are provided by residues Arg753 and 767-769 (RAI). L-aspartate is bound by residues Lys829, Arg888, and Asn964.

Belongs to the PEPCase type 1 family. In terms of assembly, homotetramer. Mg(2+) is required as a cofactor. In terms of tissue distribution, expressed in mesophyll cells, but not in bundle-sheath, roots, stems and flowers.

It localises to the cytoplasm. The enzyme catalyses oxaloacetate + phosphate = phosphoenolpyruvate + hydrogencarbonate. It functions in the pathway photosynthesis; C4 acid pathway. 5 fold activation by the allosteric regulator glucose-6-phosphate. Low sensitivity to inhibition by L-malate and L-aspartate. Up-regulated by light-reversible phosphorylation. Functionally, forms oxaloacetate through the carboxylation of phosphoenolpyruvate (PEP). Catalyzes the first step of C4 photosynthesis. In Flaveria trinervia (Clustered yellowtops), this protein is C4 phosphoenolpyruvate carboxylase.